A 256-amino-acid polypeptide reads, in one-letter code: DNA repair protein RecO (256 aa).

It belongs to the RecO family.

In terms of biological role, involved in DNA repair and RecF pathway recombination. In Streptococcus pneumoniae (strain Hungary19A-6), this protein is DNA repair protein RecO.